The following is a 497-amino-acid chain: Signal recognition particle receptor FtsY (497 aa).

Disordered stretches follow at residues 1–63 and 79–130; these read MAKE…TEAE and AESE…EWQA. A compositionally biased stretch (low complexity) spans 87 to 96; sequence EAEVVAQPEP. GTP-binding positions include 300–307, 382–386, and 446–449; these read GVNGVGKT, DTAGR, and TKLD.

Belongs to the GTP-binding SRP family. FtsY subfamily. As to quaternary structure, part of the signal recognition particle protein translocation system, which is composed of SRP and FtsY. SRP is a ribonucleoprotein composed of Ffh and a 4.5S RNA molecule. Binds to SecY. Proteolytically cleaved. The cleavage may regulate function and subcellular location of FtsY. Full-length FtsY is found primarily associated with the membrane, while cleaved protein is predominantly present in the cytoplasm.

It is found in the cell inner membrane. The protein resides in the cytoplasm. The catalysed reaction is GTP + H2O = GDP + phosphate + H(+). Conformation of the Ffh-FtsY complex and regulation of its GTPase activity are modulated by the 4.5S RNA. Formation of the FfH-FtsY complex leads to a mutual stimulation of both GTPases. Involved in targeting and insertion of nascent membrane proteins into the cytoplasmic membrane. Acts as a receptor for the complex formed by the signal recognition particle (SRP) and the ribosome-nascent chain (RNC). Interaction with SRP-RNC leads to the transfer of the RNC complex to the Sec translocase for insertion into the membrane, the hydrolysis of GTP by both Ffh and FtsY, and the dissociation of the SRP-FtsY complex into the individual components. The sequence is that of Signal recognition particle receptor FtsY from Escherichia coli (strain K12).